The primary structure comprises 70 residues: Gas vesicle protein A (70 aa).

This sequence belongs to the gas vesicle GvpA family. As to quaternary structure, the gas vesicle shell is 2 nm thick and consists of a single layer of this protein. It forms helical ribs nearly perpendicular to the long axis of the vesicle.

The protein resides in the gas vesicle shell. Its function is as follows. Gas vesicles are hollow, gas filled proteinaceous nanostructures found in some microorganisms. During planktonic growth they allow positioning of the organism at a favorable depth for light or nutrient acquisition. GvpA forms the protein shell. This is Gas vesicle protein A from Cereibacter sphaeroides (strain ATCC 17023 / DSM 158 / JCM 6121 / CCUG 31486 / LMG 2827 / NBRC 12203 / NCIMB 8253 / ATH 2.4.1.) (Rhodobacter sphaeroides).